The chain runs to 309 residues: Olfactory receptor 10V1 (309 aa).

Residues 1–25 lie on the Extracellular side of the membrane; the sequence is MEGINKTAKMQFFFRPFSPDPEVQM. Asn-5 carries an N-linked (GlcNAc...) asparagine glycan. Residues 26–46 traverse the membrane as a helical segment; the sequence is LIFVVFLMMYLTSLGGNATIA. The Cytoplasmic segment spans residues 47–54; the sequence is VIVQINHS. The helical transmembrane segment at 55 to 75 threads the bilayer; the sequence is LHTPMYFFLANLAVLEIFYTS. At 76–100 the chain is on the extracellular side; sequence SITPLALANLLSMGKTPVSITGCGT. An intrachain disulfide couples Cys-98 to Cys-190. Residues 101-121 form a helical membrane-spanning segment; sequence QMFFFVFLGGADCVLLVVMAY. Residues 122–140 are Cytoplasmic-facing; that stretch reads DQFIAICHPLRYRLIMSWS. The chain crosses the membrane as a helical span at residues 141 to 161; the sequence is LCVELLVGSLVLGFLLSLPLT. At 162–198 the chain is on the extracellular side; the sequence is ILIFHLPFCHNDEIYHFYCDMPAVMRLACADTRVHKT. A helical membrane pass occupies residues 199-218; it reads ALYIISFIVLSIPLSLISIS. Topologically, residues 219-238 are cytoplasmic; the sequence is YVFIVVAILRIRSAEGRQQA. The chain crosses the membrane as a helical span at residues 239–259; that stretch reads YSTCSSHILVVLLQYGCTSFI. At 260 to 272 the chain is on the extracellular side; that stretch reads YLSPSSSYSPEMG. The chain crosses the membrane as a helical span at residues 273–293; the sequence is RVVSVAYTFITPILNPLIYSL. At 294-309 the chain is on the cytoplasmic side; the sequence is RNKELKDALRKALRKF.

The protein belongs to the G-protein coupled receptor 1 family.

The protein localises to the cell membrane. In terms of biological role, odorant receptor. In Homo sapiens (Human), this protein is Olfactory receptor 10V1 (OR10V1).